A 438-amino-acid chain; its full sequence is Cytochrome P450 monooxygenase claJ (438 aa).

Cys378 contributes to the heme binding site.

This sequence belongs to the cytochrome P450 family. Requires heme as cofactor.

It functions in the pathway secondary metabolite biosynthesis. Cytochrome P450 monooxygenase; part of the cla gene cluster that produces clavatol and ortho-quinone methide. The clavatol biosynthesis cluster cla and the terrestric acid cluster tra are both involved in the production of peniphenones and penilactones. The non-reducing PKS claF is responsible for the formation of clavatol from successive condensations of 3 malonyl-CoA units, presumably with a simple acetyl-CoA starter unit, and 2 methylation steps. The esterase claE probably collaborates with claF by catalyzing the hydrolysis of ACP-bound acyl intermediates to free the ACP from stalled intermediates. The clavatol oxidase claD then converts clavatol to hydroxyclavatol. Spontaneous dehydration of hydroxyclavatol leads to the accumulation of the highly active ortho-quinone methide. On the other hand, the PKS-NRPS hybrid traA is involved in the formation of crustosic acid, with the help of traB and traD. The polyketide synthase module (PKS) of traA is responsible for the synthesis of the polyketide backbone via the condensation of an acetyl-CoA starter unit with 3 malonyl-CoA units. The downstream nonribosomal peptide synthetase (NRPS) module then amidates the carboxyl end of the polyketide with L-malic acid. Because traA lacks a designated enoylreductase (ER) domain, the required activity is provided the enoyl reductase traG. Crustosic acid undergoes decarboxylation and isomerization to the terrestric acid, catalyzed by the 2-oxoglutarate-dependent dioxygenase traH. Both acids are further converted to the 2 gamma-butyrolactones (R)-5-methyltetronic acid and (S)-5-carboxylmethyltetronic acid, with involvement of the cytochrome P450 monooxygenase claJ. Spontaneous addition of the methide to these gamma-butyrolactones leads to peniphenone D and penilactone D, which undergo again stereospecific attacking by methide to give penilactones A and B. The sequence is that of Cytochrome P450 monooxygenase claJ from Penicillium crustosum (Blue mold fungus).